Reading from the N-terminus, the 179-residue chain is Prion-like protein doppel (179 aa).

A signal peptide spans 1–25 (MKNRLGTWWVAILCMLLASHLSTVK). The segment at 27-50 (RGIKHRFKWNRKVLPSSGGQITEA) is flexible tail. The segment at 51 to 155 (RVAENRPGAF…KHCDFWLERG (105 aa)) is globular. 2 disulfides stabilise this stretch: Cys95–Cys148 and Cys109–Cys143. N-linked (GlcNAc...) asparagine glycans are attached at residues Asn99 and Asn111. The tract at residues 125–142 (KQDSKLHQRVLWRLIKEI) is cu(2+) binding. Gly155 is lipidated: GPI-anchor amidated glycine. The propeptide at 156–179 (AALRVAVDQPAMVCLLGFVWFIVK) is removed in mature form.

This sequence belongs to the prion family. N-glycosylated. N-glycosylated at two distinct sites. Post-translationally, O-glycosylated. In terms of tissue distribution, detected in testis. Detected within seminiferous tubules, on round and elongated spermatids (at protein level). Not detected in brain (at protein level). Detected in testis, and at low levels in heart. Expression in brain is very low and barely detectable.

It localises to the cell membrane. Required for normal acrosome reaction and for normal male fertility. Can bind Cu(2+). This is Prion-like protein doppel (Prnd) from Mus musculus (Mouse).